The chain runs to 237 residues: Methylosome subunit pICln (237 aa).

Ser2 carries the N-acetylserine modification. 6 positions are modified to phosphoserine: Ser102, Ser144, Ser193, Ser195, Ser198, and Ser210. A disordered region spans residues Leu135–Gln159. Residues Pro139–Asp153 show a composition bias toward acidic residues. The residue at position 223 (Thr223) is a Phosphothreonine.

This sequence belongs to the pICln (TC 1.A.47) family. Component of the methylosome, a 20S complex containing at least PRMT5/SKB1, WDR77/MEP50 and CLNS1A/pICln. May mediate SNRPD1 and SNRPD3 methylation. Forms a 6S pICln-Sm complex composed of CLNS1A/pICln, SNRPD1, SNRPD2, SNRPE, SNRPF and SNRPG; ring-like structure where CLNS1A/pICln mimics additional Sm proteins and which is unable to assemble into the core snRNP. Interacts with LSM10 and LSM11.

The protein resides in the cytoplasm. Its subcellular location is the cytosol. It localises to the nucleus. It is found in the cytoskeleton. Functionally, involved in both the assembly of spliceosomal snRNPs and the methylation of Sm proteins. Chaperone that regulates the assembly of spliceosomal U1, U2, U4 and U5 small nuclear ribonucleoproteins (snRNPs), the building blocks of the spliceosome, and thereby plays an important role in the splicing of cellular pre-mRNAs. Most spliceosomal snRNPs contain a common set of Sm proteins SNRPB, SNRPD1, SNRPD2, SNRPD3, SNRPE, SNRPF and SNRPG that assemble in a heptameric protein ring on the Sm site of the small nuclear RNA to form the core snRNP (Sm core). In the cytosol, the Sm proteins SNRPD1, SNRPD2, SNRPE, SNRPF and SNRPG are trapped in an inactive 6S pICln-Sm complex by the chaperone CLNS1A that controls the assembly of the core snRNP. Dissociation by the SMN complex of CLNS1A from the trapped Sm proteins and their transfer to an SMN-Sm complex triggers the assembly of core snRNPs and their transport to the nucleus. In Homo sapiens (Human), this protein is Methylosome subunit pICln (CLNS1A).